Consider the following 260-residue polypeptide: Adenosylcobinamide-GDP ribazoletransferase (260 aa).

Helical transmembrane passes span 40-60 (AFPF…LLLL), 64-84 (ADPL…TGAL), 117-137 (YGAI…AVIA), 142-162 (PLTA…AIAW), 188-208 (QFAL…AFGL), and 209-229 (RPLV…TAFI).

The protein belongs to the CobS family. It depends on Mg(2+) as a cofactor.

The protein resides in the cell inner membrane. It carries out the reaction alpha-ribazole + adenosylcob(III)inamide-GDP = adenosylcob(III)alamin + GMP + H(+). It catalyses the reaction alpha-ribazole 5'-phosphate + adenosylcob(III)inamide-GDP = adenosylcob(III)alamin 5'-phosphate + GMP + H(+). The protein operates within cofactor biosynthesis; adenosylcobalamin biosynthesis; adenosylcobalamin from cob(II)yrinate a,c-diamide: step 7/7. Functionally, joins adenosylcobinamide-GDP and alpha-ribazole to generate adenosylcobalamin (Ado-cobalamin). Also synthesizes adenosylcobalamin 5'-phosphate from adenosylcobinamide-GDP and alpha-ribazole 5'-phosphate. This chain is Adenosylcobinamide-GDP ribazoletransferase, found in Rhizobium johnstonii (strain DSM 114642 / LMG 32736 / 3841) (Rhizobium leguminosarum bv. viciae).